The chain runs to 197 residues: Recombination protein RecR (197 aa).

The C4-type zinc finger occupies 56–71 (CQQCRNLSETEICGFC). The Toprim domain maps to 79 to 174 (DQLCIVETPT…SVTRLAQGIP (96 aa)).

This sequence belongs to the RecR family.

Functionally, may play a role in DNA repair. It seems to be involved in an RecBC-independent recombinational process of DNA repair. It may act with RecF and RecO. The polypeptide is Recombination protein RecR (Hydrogenovibrio crunogenus (strain DSM 25203 / XCL-2) (Thiomicrospira crunogena)).